Here is a 103-residue protein sequence, read N- to C-terminus: Probable protease inhibitor Egf0.4b (103 aa).

An N-terminal signal peptide occupies residues 1-22; sequence MMSEKFALVLLVACIAFIGIET. A TIL domain is found at 35 to 87; it reads CGENEAYDSMRRGCEERCDDHNPTFCFKFTTVCWCEKGYVRDKSDTCIKVEDC.

Belongs to the polydnaviridae EGF-like motif protein family.

The protein is Probable protease inhibitor Egf0.4b (O11) of Microplitis demolitor bracovirus (isolate Webb) (MdBV).